Reading from the N-terminus, the 478-residue chain is Proline--tRNA ligase (478 aa).

Belongs to the class-II aminoacyl-tRNA synthetase family. ProS type 3 subfamily. In terms of assembly, homodimer.

The protein resides in the cytoplasm. The enzyme catalyses tRNA(Pro) + L-proline + ATP = L-prolyl-tRNA(Pro) + AMP + diphosphate. Catalyzes the attachment of proline to tRNA(Pro) in a two-step reaction: proline is first activated by ATP to form Pro-AMP and then transferred to the acceptor end of tRNA(Pro). This is Proline--tRNA ligase from Clostridium botulinum (strain Kyoto / Type A2).